A 106-amino-acid chain; its full sequence is Thiosulfate sulfurtransferase GlpE (106 aa).

Positions 17-105 constitute a Rhodanese domain; the sequence is SRGEARLVDI…WHRASLPVEA (89 aa). The active-site Cysteine persulfide intermediate is the Cys65.

Belongs to the GlpE family.

The protein localises to the cytoplasm. It carries out the reaction thiosulfate + hydrogen cyanide = thiocyanate + sulfite + 2 H(+). The catalysed reaction is thiosulfate + [thioredoxin]-dithiol = [thioredoxin]-disulfide + hydrogen sulfide + sulfite + 2 H(+). Functionally, transferase that catalyzes the transfer of sulfur from thiosulfate to thiophilic acceptors such as cyanide or dithiols. May function in a CysM-independent thiosulfate assimilation pathway by catalyzing the conversion of thiosulfate to sulfite, which can then be used for L-cysteine biosynthesis. This chain is Thiosulfate sulfurtransferase GlpE, found in Vibrio vulnificus (strain CMCP6).